The primary structure comprises 76 residues: MPSVRSVTCCCLLWMMFSVQLVTPGSPGTAQLSGHRTARFPRPRICNLACRAGIGHKYPFCHCRGKRDAVSSSMAV.

The signal sequence occupies residues 1–24 (MPSVRSVTCCCLLWMMFSVQLVTP). Residues 25 to 39 (GSPGTAQLSGHRTAR) constitute a propeptide that is removed on maturation. 2 disulfide bridges follow: Cys46-Cys61 and Cys50-Cys63. At Arg64 the chain carries Arginine amide. The propeptide occupies 65 to 76 (GKRDAVSSSMAV).

The protein belongs to the conotoxin J superfamily. In terms of tissue distribution, expressed by the venom duct.

It localises to the secreted. Functionally, highly inhibits both nicotinic acetylcholine receptors (neuronal (IC(50)=8.7 uM for alpha-3/beta-4) and muscular (IC(50)=0.54 uM for alpha-1-beta-1-epsilon-delta (CHRNA1-CHRNB1-CHRND-CHRNE)) subtypes) and the voltage-gated potassium channel Kv1.6/KCNA6 subtype (IC(50)=1.59 uM). The sequence is that of Alpha/kappa-conotoxin pl14a from Conus planorbis (Planorbis cone).